Consider the following 142-residue polypeptide: Anti-sigma F factor (142 aa).

Belongs to the anti-sigma-factor family.

It carries out the reaction L-seryl-[protein] + ATP = O-phospho-L-seryl-[protein] + ADP + H(+). The catalysed reaction is L-threonyl-[protein] + ATP = O-phospho-L-threonyl-[protein] + ADP + H(+). Binds to sigma F and blocks its ability to form an RNA polymerase holoenzyme (E-sigma F). Phosphorylates SpoIIAA on a serine residue. This phosphorylation may enable SpoIIAA to act as an anti-anti-sigma factor that counteracts SpoIIAB and thus releases sigma F from inhibition. The polypeptide is Anti-sigma F factor (Clostridium kluyveri (strain NBRC 12016)).